We begin with the raw amino-acid sequence, 319 residues long: Oxaloacetate tautomerase fahd2, mitochondrial (319 aa).

A mitochondrion-targeting transit peptide spans methionine 1–serine 31. Glutamate 164, glutamate 166, and aspartate 195 together coordinate Mg(2+).

Belongs to the FAH family. Mg(2+) is required as a cofactor. Mn(2+) serves as cofactor.

The protein resides in the mitochondrion. The catalysed reaction is oxaloacetate = enol-oxaloacetate. Its function is as follows. Tautomerase that converts enol-oxaloacetate, a strong inhibitor of succinate dehydrogenase, to the physiological keto form of oxaloacetate. It is thereby required to maximize aerobic respiration efficiency by preventing succinate dehydrogenase inhibition. The polypeptide is Oxaloacetate tautomerase fahd2, mitochondrial (fahd2) (Xenopus laevis (African clawed frog)).